Reading from the N-terminus, the 854-residue chain is ATP-dependent Clp protease ATP-binding subunit ClpA homolog (854 aa).

Residues 33–175 enclose the Clp R domain; sequence FERFTEKAVK…RSNIIRMIGE (143 aa). Repeat regions lie at residues 36-101 and 111-175; these read FTEK…IGRG and FTPR…MIGE. 238 to 245 serves as a coordination point for ATP; it reads GEPGVGKT. Residues 447-482 enclose the UVR domain; the sequence is DEELRHIQKIKNELIRSGDFEEASQFREREIEVKVQ. 579–586 is an ATP binding site; that stretch reads GPTGVGKT.

The protein belongs to the ClpA/ClpB family.

The protein resides in the plastid. Its subcellular location is the chloroplast. Functionally, may interact with a ClpP-like protease involved in degradation of denatured proteins in the chloroplast. This Cyanidium caldarium (Red alga) protein is ATP-dependent Clp protease ATP-binding subunit ClpA homolog (clpC).